A 172-amino-acid polypeptide reads, in one-letter code: Small ribosomal subunit protein uS13c (172 aa).

A chloroplast-targeting transit peptide spans 1–47 (MAHTLATPVAPSVSLICNTKLSVSLSSSSLAFRPVNPKNGGGLSIKC).

As to quaternary structure, component of the chloroplast small ribosomal subunit (SSU). Mature 70S chloroplast ribosomes of higher plants consist of a small (30S) and a large (50S) subunit. The 30S small subunit contains 1 molecule of ribosomal RNA (16S rRNA) and 24 different proteins. The 50S large subunit contains 3 rRNA molecules (23S, 5S and 4.5S rRNA) and 33 different proteins. uS13c interacts with translation factor pY (PSRP1).

It is found in the plastid. It localises to the chloroplast. Its function is as follows. Component of the chloroplast ribosome (chloro-ribosome), a dedicated translation machinery responsible for the synthesis of chloroplast genome-encoded proteins, including proteins of the transcription and translation machinery and components of the photosynthetic apparatus. The chain is Small ribosomal subunit protein uS13c (RPS13) from Spinacia oleracea (Spinach).